The following is a 131-amino-acid chain: Small ribosomal subunit protein eS8 (131 aa).

The segment at 1–42 (MKLGAYYKGGDLKKPSGGKKRKVRKTKKKALGGGPPQIPKLG) is disordered. Over residues 16 to 30 (SGGKKRKVRKTKKKA) the composition is skewed to basic residues.

This sequence belongs to the eukaryotic ribosomal protein eS8 family. Part of the 30S ribosomal subunit.

This Pyrobaculum aerophilum (strain ATCC 51768 / DSM 7523 / JCM 9630 / CIP 104966 / NBRC 100827 / IM2) protein is Small ribosomal subunit protein eS8.